A 370-amino-acid polypeptide reads, in one-letter code: Glutathione S-transferase omega-like 2 (370 aa).

Position 15 (Arg15) interacts with glutathione. The active-site Nucleophile is the Cys46. Residues Trp79, Arg155, Val158, Glu173, and Ser174 each coordinate glutathione. In terms of domain architecture, GST C-terminal spans 201-353 (PAQLKTQIDD…LHYTRSHTRI (153 aa)).

The protein belongs to the GST superfamily. Omega family. As to quaternary structure, homodimer.

The protein localises to the cytoplasm. It carries out the reaction RX + glutathione = an S-substituted glutathione + a halide anion + H(+). It catalyses the reaction L-dehydroascorbate + 2 glutathione = glutathione disulfide + L-ascorbate. In terms of biological role, active as '1-Cys' thiol transferase against beta-hydroxyethyl disulfide (HED), as dehydroascorbate reductase and as dimethylarsinic acid reductase, while not active against the standard GST substrate 1-chloro-2,4-dinitrobenzene (CDNB). May be involved in cell wall organization and biogenesis. This is Glutathione S-transferase omega-like 2 from Saccharomyces cerevisiae (strain ATCC 204508 / S288c) (Baker's yeast).